The following is a 585-amino-acid chain: Zinc finger protein C11D3.17 (585 aa).

2 C2H2-type zinc fingers span residues 31–53 (FPCD…KACH) and 59–82 (IPCP…QRFH). T553 bears the Phosphothreonine mark.

It localises to the nucleus. In Schizosaccharomyces pombe (strain 972 / ATCC 24843) (Fission yeast), this protein is Zinc finger protein C11D3.17.